The sequence spans 184 residues: Cathelicidin-related peptide Pt_CRAMP2 (184 aa).

The signal sequence occupies residues 1-22 (MDGFFWKTWLVVAALAIGGTSS). Positions 23–150 (LPHKPLTYEE…EDEKDQPRRV (128 aa)) are excised as a propeptide. 2 disulfide bridges follow: C81/C92 and C103/C120. Residues 125-144 (EDEEQNQEEEEEEEKEEDEK) show a composition bias toward acidic residues. The disordered stretch occupies residues 125–147 (EDEEQNQEEEEEEEKEEDEKDQP).

The protein belongs to the cathelicidin family. Expressed by the venom gland.

Its subcellular location is the secreted. The protein resides in the target cell membrane. Potent antimicrobial peptide against most of Gram-negative bacteria, some Gram-positive bacteria (Bacillus) and some fungi (C.albicans, P.pastoris, A.terreus, A.nidulans, and C.globosum). Adopts an amphipathic alpha helical conformation, that may allow to partition into the target membrane. No hemolytic and cytotoxic activities have been observed on mammalian cells. The protein is Cathelicidin-related peptide Pt_CRAMP2 of Pseudonaja textilis (Eastern brown snake).